The sequence spans 200 residues: UPF0301 protein BOV_0485 (200 aa).

The protein belongs to the UPF0301 (AlgH) family.

This chain is UPF0301 protein BOV_0485, found in Brucella ovis (strain ATCC 25840 / 63/290 / NCTC 10512).